The following is an 87-amino-acid chain: Sec-independent protein translocase protein TatA (87 aa).

The chain crosses the membrane as a helical span at residues 3 to 23 (IFGIGLPEMIVILVVALLIFG). The interval 61 to 87 (EGVKVSTSASEPEKVVDVSSATNTNKN) is disordered.

Belongs to the TatA/E family. Forms a complex with TatC.

It is found in the cell inner membrane. In terms of biological role, part of the twin-arginine translocation (Tat) system that transports large folded proteins containing a characteristic twin-arginine motif in their signal peptide across membranes. TatA could form the protein-conducting channel of the Tat system. The sequence is that of Sec-independent protein translocase protein TatA from Trichodesmium erythraeum (strain IMS101).